Reading from the N-terminus, the 309-residue chain is UPF0276 protein RB0508 (309 aa).

The protein belongs to the UPF0276 family.

The chain is UPF0276 protein RB0508 from Rhizobium meliloti (strain 1021) (Ensifer meliloti).